Reading from the N-terminus, the 213-residue chain is Thiamine-phosphate synthase (213 aa).

Residues 43–47 (QLRDK) and Asn-74 contribute to the 4-amino-2-methyl-5-(diphosphooxymethyl)pyrimidine site. Positions 75 and 94 each coordinate Mg(2+). Ser-113 lines the 4-amino-2-methyl-5-(diphosphooxymethyl)pyrimidine pocket. Residue 142 to 144 (TAT) coordinates 2-[(2R,5Z)-2-carboxy-4-methylthiazol-5(2H)-ylidene]ethyl phosphate. Lys-145 lines the 4-amino-2-methyl-5-(diphosphooxymethyl)pyrimidine pocket. Residues Gly-173 and 193–194 (VS) contribute to the 2-[(2R,5Z)-2-carboxy-4-methylthiazol-5(2H)-ylidene]ethyl phosphate site.

The protein belongs to the thiamine-phosphate synthase family. Mg(2+) serves as cofactor.

The enzyme catalyses 2-[(2R,5Z)-2-carboxy-4-methylthiazol-5(2H)-ylidene]ethyl phosphate + 4-amino-2-methyl-5-(diphosphooxymethyl)pyrimidine + 2 H(+) = thiamine phosphate + CO2 + diphosphate. The catalysed reaction is 2-(2-carboxy-4-methylthiazol-5-yl)ethyl phosphate + 4-amino-2-methyl-5-(diphosphooxymethyl)pyrimidine + 2 H(+) = thiamine phosphate + CO2 + diphosphate. It carries out the reaction 4-methyl-5-(2-phosphooxyethyl)-thiazole + 4-amino-2-methyl-5-(diphosphooxymethyl)pyrimidine + H(+) = thiamine phosphate + diphosphate. It functions in the pathway cofactor biosynthesis; thiamine diphosphate biosynthesis; thiamine phosphate from 4-amino-2-methyl-5-diphosphomethylpyrimidine and 4-methyl-5-(2-phosphoethyl)-thiazole: step 1/1. Its function is as follows. Condenses 4-methyl-5-(beta-hydroxyethyl)thiazole monophosphate (THZ-P) and 2-methyl-4-amino-5-hydroxymethyl pyrimidine pyrophosphate (HMP-PP) to form thiamine monophosphate (TMP). This chain is Thiamine-phosphate synthase, found in Psychrobacter sp. (strain PRwf-1).